Consider the following 836-residue polypeptide: uncharacterized protein (836 aa).

Disordered stretches follow at residues 1–25, 692–718, and 789–836; these read MDST…NEEE, DSRS…NNQR, and ESSG…GYAS. Polar residues-rich tracts occupy residues 789-799 and 825-836; these read ESSGINVSNTR and IDSSSAQNGYAS.

The protein localises to the nucleus. This is an uncharacterized protein from Schizosaccharomyces pombe (strain 972 / ATCC 24843) (Fission yeast).